Reading from the N-terminus, the 532-residue chain is FRIGIDA-like protein 4a (532 aa).

The disordered stretch occupies residues 406-432 (KTEKRKPAAVPANKRTRASYNGPMPPA).

Belongs to the Frigida family. Expressed in leaves, shoot apex, flowers and during seed development.

This Arabidopsis thaliana (Mouse-ear cress) protein is FRIGIDA-like protein 4a (FRL4A).